Reading from the N-terminus, the 176-residue chain is Large ribosomal subunit protein uL16 (176 aa).

The protein belongs to the universal ribosomal protein uL16 family.

This Halorubrum lacusprofundi (strain ATCC 49239 / DSM 5036 / JCM 8891 / ACAM 34) protein is Large ribosomal subunit protein uL16.